Here is a 226-residue protein sequence, read N- to C-terminus: Transmembrane protein 204 (226 aa).

Over 1 to 5 (MTVRK) the chain is Cytoplasmic. Residues 6–26 (VVATAVLVALVSLVLNNAAAF) form a helical membrane-spanning segment. At 27-103 (TPNWVYQTLE…LQFDMMRACN (77 aa)) the chain is on the extracellular side. A helical membrane pass occupies residues 104-124 (LVATAALAAGQLTFVLGLTGL). The Cytoplasmic portion of the chain corresponds to 125–136 (PLLSPDAQCWEE). A helical membrane pass occupies residues 137-157 (AMAAAFQLASFVLVIGLVTFY). Residues 158-170 (RIGPYTSLSWSCY) are Extracellular-facing. Residues 171–191 (LNIGACLLATLAAAMLIWNVL) form a helical membrane-spanning segment. Residues 192 to 226 (HRREDCTAPRVIVISRSLTARFRRGLDNDYVESPC) lie on the Cytoplasmic side of the membrane.

The protein localises to the cell junction. Its subcellular location is the adherens junction. It localises to the cell membrane. Functionally, can influence paracellular permeability. Appears to be involved in cell-cell interactions through adherens. The polypeptide is Transmembrane protein 204 (TMEM204) (Bos taurus (Bovine)).